The following is a 92-amino-acid chain: Small ribosomal subunit protein uS19 (92 aa).

The protein belongs to the universal ribosomal protein uS19 family.

In terms of biological role, protein S19 forms a complex with S13 that binds strongly to the 16S ribosomal RNA. The sequence is that of Small ribosomal subunit protein uS19 from Lysinibacillus sphaericus (strain C3-41).